A 264-amino-acid polypeptide reads, in one-letter code: Proteasome subunit beta type-4 (264 aa).

Position 1 is an N-acetylmethionine (Met1). The propeptide occupies 1–45; it reads MEALLESRSGLWAGGPAPGQFYRIPPTPGSSVDPVSALYGSPITR. Tyr102 is modified (phosphotyrosine).

Belongs to the peptidase T1B family. In terms of assembly, the 26S proteasome consists of a 20S proteasome core and two 19S regulatory subunits. The 20S proteasome core is a barrel-shaped complex made of 28 subunits that are arranged in four stacked rings. The two outer rings are each formed by seven alpha subunits, and the two inner rings are formed by seven beta subunits. The proteolytic activity is exerted by three beta-subunits PSMB5, PSMB6 and PSMB7. Forms a ternary complex with SMAD1 and OAZ1 before PSMB4 is incorporated into the 20S proteasome. Interacts with PRPF19.

It is found in the cytoplasm. The protein localises to the nucleus. Functionally, non-catalytic component of the 20S core proteasome complex involved in the proteolytic degradation of most intracellular proteins. This complex plays numerous essential roles within the cell by associating with different regulatory particles. Associated with two 19S regulatory particles, forms the 26S proteasome and thus participates in the ATP-dependent degradation of ubiquitinated proteins. The 26S proteasome plays a key role in the maintenance of protein homeostasis by removing misfolded or damaged proteins that could impair cellular functions, and by removing proteins whose functions are no longer required. Associated with the PA200 or PA28, the 20S proteasome mediates ubiquitin-independent protein degradation. This type of proteolysis is required in several pathways including spermatogenesis (20S-PA200 complex) or generation of a subset of MHC class I-presented antigenic peptides (20S-PA28 complex). SMAD1/OAZ1/PSMB4 complex mediates the degradation of the CREBBP/EP300 repressor SNIP1. This is Proteasome subunit beta type-4 (PSMB4) from Bos taurus (Bovine).